The sequence spans 114 residues: uncharacterized protein (114 aa).

Its function is as follows. May be associated with transposition functions of transposon Tn903. This is an uncharacterized protein from Escherichia coli.